Here is a 228-residue protein sequence, read N- to C-terminus: MAPIDWKKWRHVTKLDPDKKITRQDIAAIVDSGTDAVMISGTQNITKENVGNMIDMLAEYSIPKVLEPSVSAIIRNDVDFIFVPSIFNTKYSKFAVGYHKDFVKNYPDEVLDKVIPEAYIVLNPLSAVAIVTRAQTGISPREAAAYAELADRFFRFPVVYIEYSGTYGNPELVKAVREKLTNTVLYYGGGIDSREKAETMAKYANTIVVGNAVYKKGGIEKLKETIVK.

K14 is a sn-glycerol 1-phosphate binding site. Mg(2+) is bound by residues D16 and T42. Sn-glycerol 1-phosphate is bound by residues 160–165 (YIEYSG), G190, and 210–211 (GN).

It belongs to the GGGP/HepGP synthase family. Group I subfamily. It depends on Mg(2+) as a cofactor.

Its subcellular location is the cytoplasm. It catalyses the reaction sn-glycerol 1-phosphate + (2E,6E,10E)-geranylgeranyl diphosphate = sn-3-O-(geranylgeranyl)glycerol 1-phosphate + diphosphate. It functions in the pathway membrane lipid metabolism; glycerophospholipid metabolism. Functionally, prenyltransferase that catalyzes the transfer of the geranylgeranyl moiety of geranylgeranyl diphosphate (GGPP) to the C3 hydroxyl of sn-glycerol-1-phosphate (G1P). This reaction is the first ether-bond-formation step in the biosynthesis of archaeal membrane lipids. This is Geranylgeranylglyceryl phosphate synthase from Methanocella arvoryzae (strain DSM 22066 / NBRC 105507 / MRE50).